Here is a 430-residue protein sequence, read N- to C-terminus: MGQSVVVLGAQWGDEGKGKIVDLLTEEIGAVVRFQGGHNAGHTLVINGKKTVLHLIPSGILRDDALCLIGNGVVISPAALIKEISELEDAGVEVRSRLKISPAAPLIMPYHIALDQAREKAAGGKAIGTTGRGIGPAYEDKVARRGIRIADLHYPPQLEELLRTALDYHNFVLTKYLGVEAVDFQKTYDEALAFGEYVQPMKSDVAGILHDLRKQGKRVLFEGAQGALLDIDHGTYPYVTSSNTTVGGALAGTGVGADAIDYVLGIAKAYATRVGGGPFPTELDDEVGQGIRDRGAEYGASTGRPRRCGWMDIVALKRAVAINGISGLCITKLDVLDGMEKLKICIAYEYHGKRTEYAPLDAQGWEECTPVYLEFPGWSENTHGITVWDDLPPAARAYLRALEELAGCPISIVSTGPDRDHTMVLQDPFA.

Residues 13-19 (GDEGKGK) and 41-43 (GHT) contribute to the GTP site. Residue Asp-14 is the Proton acceptor of the active site. Residues Asp-14 and Gly-41 each coordinate Mg(2+). Residues 14-17 (DEGK), 39-42 (NAGH), Thr-130, Arg-144, Gln-225, Thr-240, and Arg-304 contribute to the IMP site. His-42 acts as the Proton donor in catalysis. Residue 300-306 (ASTGRPR) coordinates substrate. GTP is bound by residues Arg-306, 332 to 334 (KLD), and 414 to 416 (STG).

Belongs to the adenylosuccinate synthetase family. As to quaternary structure, homodimer. Mg(2+) is required as a cofactor.

Its subcellular location is the cytoplasm. The catalysed reaction is IMP + L-aspartate + GTP = N(6)-(1,2-dicarboxyethyl)-AMP + GDP + phosphate + 2 H(+). The protein operates within purine metabolism; AMP biosynthesis via de novo pathway; AMP from IMP: step 1/2. In terms of biological role, plays an important role in the de novo pathway of purine nucleotide biosynthesis. Catalyzes the first committed step in the biosynthesis of AMP from IMP. The chain is Adenylosuccinate synthetase from Xanthomonas axonopodis pv. citri (strain 306).